A 594-amino-acid polypeptide reads, in one-letter code: UvrABC system protein C (594 aa).

The region spanning 14–91 is the GIY-YIG domain; sequence DQPGCYLMKD…IKKYDPKYNI (78 aa). Residues 196–231 enclose the UVR domain; the sequence is KEVRSELEIKMYEASEKLEFERAKELRDQIAHIDAI.

It belongs to the UvrC family. As to quaternary structure, interacts with UvrB in an incision complex.

It is found in the cytoplasm. Its function is as follows. The UvrABC repair system catalyzes the recognition and processing of DNA lesions. UvrC both incises the 5' and 3' sides of the lesion. The N-terminal half is responsible for the 3' incision and the C-terminal half is responsible for the 5' incision. This chain is UvrABC system protein C, found in Bacillus cereus (strain B4264).